Reading from the N-terminus, the 269-residue chain is 4-hydroxy-tetrahydrodipicolinate reductase (269 aa).

Residues 8 to 13 (GAAGRM) and Glu34 contribute to the NAD(+) site. Residue Arg35 coordinates NADP(+). NAD(+) is bound by residues 98-100 (GTT) and 122-125 (APNY). His155 acts as the Proton donor/acceptor in catalysis. His156 is a (S)-2,3,4,5-tetrahydrodipicolinate binding site. Lys159 serves as the catalytic Proton donor. 165-166 (GT) contributes to the (S)-2,3,4,5-tetrahydrodipicolinate binding site.

This sequence belongs to the DapB family.

The protein localises to the cytoplasm. The enzyme catalyses (S)-2,3,4,5-tetrahydrodipicolinate + NAD(+) + H2O = (2S,4S)-4-hydroxy-2,3,4,5-tetrahydrodipicolinate + NADH + H(+). It catalyses the reaction (S)-2,3,4,5-tetrahydrodipicolinate + NADP(+) + H2O = (2S,4S)-4-hydroxy-2,3,4,5-tetrahydrodipicolinate + NADPH + H(+). The protein operates within amino-acid biosynthesis; L-lysine biosynthesis via DAP pathway; (S)-tetrahydrodipicolinate from L-aspartate: step 4/4. Its function is as follows. Catalyzes the conversion of 4-hydroxy-tetrahydrodipicolinate (HTPA) to tetrahydrodipicolinate. The polypeptide is 4-hydroxy-tetrahydrodipicolinate reductase (Vibrio atlanticus (strain LGP32) (Vibrio splendidus (strain Mel32))).